The chain runs to 741 residues: MAKQTFEMTFEGRPLVVEVGQVAKQANGAVVVRYGDTTVLSVAVMSKKMATADFFPLQVNYEEKMYAAGKFPGGFSKREGRPSTDATLTARLIDRPIRPMFAEGFRNEVQVINTVLSYDENASAPMAAMFGSSLALSISDIPFNGPIAGVQVAYAAEDFIINPSASDKEVSHLDLIVAGTKEAINMVEAGAQELSEDIMLQALLKGHEAIQELVDFQNYIVAAVGKEKAEVELFQVNADLKAEIEAVYYDQLAKAVQVEEKLAREAATKAVKEEVLASYQERFAEDEDKETILRDVVEILEQMEHAEVRRLITEDKVRPDGRRVDEIRPLDAEIDFLPKVHGSGLFTRGQTQALSVLTLAPMSDTQLVDGLDPEYKKRFLHHYNFPQYSVGKTGRYGAPGRREIGHGVLGERALAQVLPSVEEFPYAIRLVAEVLESNGSSSQASICAGTLALMAGGVPIKAPVAGIAMGLISDGTNYTVLTDIQGLEDHFGDMDFKVAGTRLGITALQMDIKISGITPAILEEALAQAKVARFEILDVIESAIAEPRSELAPTAPKIDSIQIPVDKIKVVIGKGGETIDKIIAETGVTIDIDEEGLVQIFSSDQDAIDRAKTIISDLVREAKVGEVYTVPVVRIEKFGAFVHLFNKTDALVHISELAWKHTEHVEDVVKVGDMVTVKIIKIDEKGRVDASIKTLLPKPEKNEDGENGEEHRHCCCSHHKPDHHSESMEAPKKSDESETKE.

Mg(2+) is bound by residues Asp-489 and Asp-495. Residues 556-615 form the KH domain; it reads PKIDSIQIPVDKIKVVIGKGGETIDKIIAETGVTIDIDEEGLVQIFSSDQDAIDRAKTII. In terms of domain architecture, S1 motif spans 625 to 693; the sequence is GEVYTVPVVR…EKGRVDASIK (69 aa). A disordered region spans residues 696-741; sequence LPKPEKNEDGENGEEHRHCCCSHHKPDHHSESMEAPKKSDESETKE. Basic and acidic residues-rich tracts occupy residues 698–713 and 723–741; these read KPEKNEDGENGEEHRH and HHSESMEAPKKSDESETKE.

The protein belongs to the polyribonucleotide nucleotidyltransferase family. Requires Mg(2+) as cofactor.

The protein localises to the cytoplasm. It carries out the reaction RNA(n+1) + phosphate = RNA(n) + a ribonucleoside 5'-diphosphate. Its function is as follows. Involved in mRNA degradation. Catalyzes the phosphorolysis of single-stranded polyribonucleotides processively in the 3'- to 5'-direction. This chain is Polyribonucleotide nucleotidyltransferase, found in Streptococcus thermophilus (strain ATCC BAA-491 / LMD-9).